The sequence spans 139 residues: Trafficking protein particle complex subunit 2-like protein (139 aa).

This sequence belongs to the TRAPP small subunits family. Sedlin subfamily.

The protein localises to the cytoplasm. The protein resides in the perinuclear region. Its subcellular location is the endoplasmic reticulum. It localises to the golgi apparatus. May play a role in vesicular transport from endoplasmic reticulum to Golgi. This chain is Trafficking protein particle complex subunit 2-like protein (TRAPPC2L), found in Taeniopygia guttata (Zebra finch).